Here is a 480-residue protein sequence, read N- to C-terminus: tRNA-2-methylthio-N(6)-dimethylallyladenosine synthase (480 aa).

The MTTase N-terminal domain maps to 25–145; sequence GVFYVHTLGC…LPQLLDQARI (121 aa). Residues cysteine 34, cysteine 74, cysteine 108, cysteine 182, cysteine 186, and cysteine 189 each contribute to the [4Fe-4S] cluster site. The Radical SAM core domain maps to 168 to 397; it reads RASKVSSWVA…VALQERITEE (230 aa). A TRAM domain is found at 400–470; that stretch reads KTFEGRDVEV…RHNLIADPNP (71 aa).

The protein belongs to the methylthiotransferase family. MiaB subfamily. In terms of assembly, monomer. [4Fe-4S] cluster serves as cofactor.

It is found in the cytoplasm. It carries out the reaction N(6)-dimethylallyladenosine(37) in tRNA + (sulfur carrier)-SH + AH2 + 2 S-adenosyl-L-methionine = 2-methylsulfanyl-N(6)-dimethylallyladenosine(37) in tRNA + (sulfur carrier)-H + 5'-deoxyadenosine + L-methionine + A + S-adenosyl-L-homocysteine + 2 H(+). Catalyzes the methylthiolation of N6-(dimethylallyl)adenosine (i(6)A), leading to the formation of 2-methylthio-N6-(dimethylallyl)adenosine (ms(2)i(6)A) at position 37 in tRNAs that read codons beginning with uridine. This Bifidobacterium adolescentis (strain ATCC 15703 / DSM 20083 / NCTC 11814 / E194a) protein is tRNA-2-methylthio-N(6)-dimethylallyladenosine synthase.